The chain runs to 306 residues: tRNA pseudouridine synthase B (306 aa).

Residue Asp47 is the Nucleophile of the active site.

The protein belongs to the pseudouridine synthase TruB family. Type 1 subfamily.

It carries out the reaction uridine(55) in tRNA = pseudouridine(55) in tRNA. Its function is as follows. Responsible for synthesis of pseudouridine from uracil-55 in the psi GC loop of transfer RNAs. The protein is tRNA pseudouridine synthase B of Neisseria meningitidis serogroup A / serotype 4A (strain DSM 15465 / Z2491).